The primary structure comprises 331 residues: Protoheme IX farnesyltransferase (331 aa).

Helical transmembrane passes span 22-42 (LVKP…MWMA), 50-70 (FGVT…INMV), 100-120 (FAGI…NLLA), 147-167 (IVIG…AATG), 174-194 (WVMF…LAIL), 220-240 (ILLY…PLHV), 241-261 (LGSF…WKAV), 273-293 (ATSL…AMGL), and 307-327 (LASL…LGAM).

This sequence belongs to the UbiA prenyltransferase family. Protoheme IX farnesyltransferase subfamily.

It localises to the cell inner membrane. The catalysed reaction is heme b + (2E,6E)-farnesyl diphosphate + H2O = Fe(II)-heme o + diphosphate. It participates in porphyrin-containing compound metabolism; heme O biosynthesis; heme O from protoheme: step 1/1. Converts heme B (protoheme IX) to heme O by substitution of the vinyl group on carbon 2 of heme B porphyrin ring with a hydroxyethyl farnesyl side group. This is Protoheme IX farnesyltransferase from Synechococcus sp. (strain JA-3-3Ab) (Cyanobacteria bacterium Yellowstone A-Prime).